A 258-amino-acid polypeptide reads, in one-letter code: Protein T1 (258 aa).

The first 17 residues, 1–17, serve as a signal peptide directing secretion; that stretch reads MRRLCIILLVYVYATFA. Residues Asn-67, Asn-151, and Asn-172 are each glycosylated (N-linked (GlcNAc...) asparagine; by host).

It belongs to the poxviruses A41 family.

The polypeptide is Protein T1 (Rabbit fibroma virus (strain Kasza) (RFV)).